A 276-amino-acid chain; its full sequence is Formamidopyrimidine-DNA glycosylase (276 aa).

The active-site Schiff-base intermediate with DNA is P2. E3 acts as the Proton donor in catalysis. K60 (proton donor; for beta-elimination activity) is an active-site residue. DNA contacts are provided by H93, R112, and R155. An FPG-type zinc finger spans residues 240–274 (LVYGRKDEACTKCGAEIIRFVVGGRGTHICPDCQK). R264 acts as the Proton donor; for delta-elimination activity in catalysis.

This sequence belongs to the FPG family. In terms of assembly, monomer. Zn(2+) serves as cofactor.

The enzyme catalyses Hydrolysis of DNA containing ring-opened 7-methylguanine residues, releasing 2,6-diamino-4-hydroxy-5-(N-methyl)formamidopyrimidine.. The catalysed reaction is 2'-deoxyribonucleotide-(2'-deoxyribose 5'-phosphate)-2'-deoxyribonucleotide-DNA = a 3'-end 2'-deoxyribonucleotide-(2,3-dehydro-2,3-deoxyribose 5'-phosphate)-DNA + a 5'-end 5'-phospho-2'-deoxyribonucleoside-DNA + H(+). In terms of biological role, involved in base excision repair of DNA damaged by oxidation or by mutagenic agents. Acts as a DNA glycosylase that recognizes and removes damaged bases. Has a preference for oxidized purines, such as 7,8-dihydro-8-oxoguanine (8-oxoG). Has AP (apurinic/apyrimidinic) lyase activity and introduces nicks in the DNA strand. Cleaves the DNA backbone by beta-delta elimination to generate a single-strand break at the site of the removed base with both 3'- and 5'-phosphates. The sequence is that of Formamidopyrimidine-DNA glycosylase from Brevibacillus brevis (strain 47 / JCM 6285 / NBRC 100599).